Reading from the N-terminus, the 207-residue chain is MARYIGPKAKLSRREGTDLFLKSARRSLDSKCKLDSKPGQHGRTSGARTSDYGNQLREKQKVKRMYGILERQFRRYFAEADRRKGNTGETLLKLLETRLDNVVYRMGFGSTRAEGRQLVSHKAFTVNGIVVNIASYQVKPGDIVAVREKSKKQVRIVEALSLAEQIGMPSWVAVDSKKMEGTFKSVPDRSEIAADVNESLIVELYSR.

A disordered region spans residues lysine 31–leucine 56. Over residues glycine 42–glycine 53 the composition is skewed to polar residues. Residues threonine 97–valine 157 form the S4 RNA-binding domain.

The protein belongs to the universal ribosomal protein uS4 family. In terms of assembly, part of the 30S ribosomal subunit. Contacts protein S5. The interaction surface between S4 and S5 is involved in control of translational fidelity.

Its function is as follows. One of the primary rRNA binding proteins, it binds directly to 16S rRNA where it nucleates assembly of the body of the 30S subunit. With S5 and S12 plays an important role in translational accuracy. This chain is Small ribosomal subunit protein uS4, found in Herminiimonas arsenicoxydans.